The primary structure comprises 220 residues: MADS-box protein AGL24 (220 aa).

The 61-residue stretch at 1-61 folds into the MADS-box domain; that stretch reads MAREKIRIKK…GKLFEFSSSR (61 aa). One can recognise a K-box domain in the interval 87–177; sequence LRLENCNLSR…RDKLETLERA (91 aa). Residues 190 to 200 show a composition bias toward polar residues; the sequence is SVTTNVSSYDS. The disordered stretch occupies residues 190-220; the sequence is SVTTNVSSYDSGTPLEDDSDTSLKLGLPSWE.

Interacts with IMK3/MRLK. Forms a homodimer and heterodimer with SOC1, AP1 and SVP through MADS-box domain. Interacts with the SEU-LUG corepressor complex when complexed to AP1. Interacts with AGL15 and AGL16. In terms of processing, phosphorylated by IMK3. Induced by vernalization. Mostly expressed in shoot apical meristems, including floral meristems. Also detected in stems, seedlings, leaves, flowers and siliques, and, to a lower extent, in roots.

It localises to the nucleus. The protein resides in the cytoplasm. In terms of biological role, transcription activator that mediates floral transition in response to vernalization. Promotes inflorescence fate in apical meristems. Acts in a dosage-dependent manner. Probably involved in the transduction of RLK-mediated signaling (e.g. IMK3 pathway). Together with AP1 and SVP, controls the identity of the floral meristem and regulates expression of class B, C and E genes. When associated with SOC1, mediates effect of gibberellins on flowering under short-day conditions, and regulates the expression of LEAFY (LFY), which links floral induction and floral development. Confers inflorescence characteristics to floral primordia and early flowering. In Arabidopsis thaliana (Mouse-ear cress), this protein is MADS-box protein AGL24 (AGL24).